The chain runs to 423 residues: Glutamate-1-semialdehyde 2,1-aminomutase (423 aa).

The residue at position 258 (K258) is an N6-(pyridoxal phosphate)lysine.

It belongs to the class-III pyridoxal-phosphate-dependent aminotransferase family. HemL subfamily. The cofactor is pyridoxal 5'-phosphate.

It is found in the cytoplasm. It carries out the reaction (S)-4-amino-5-oxopentanoate = 5-aminolevulinate. It functions in the pathway porphyrin-containing compound metabolism; protoporphyrin-IX biosynthesis; 5-aminolevulinate from L-glutamyl-tRNA(Glu): step 2/2. The polypeptide is Glutamate-1-semialdehyde 2,1-aminomutase (Pyrobaculum arsenaticum (strain DSM 13514 / JCM 11321 / PZ6)).